The following is a 67-amino-acid chain: Conotoxin AbVIO (67 aa).

The first 17 residues, 1-17 (VIIIAVLFLTACQLIAT), serve as a signal peptide directing secretion. Residues 18 to 40 (ASYARSERKHPDLRLSSRNSKLS) constitute a propeptide that is removed on maturation. 3 cysteine pairs are disulfide-bonded: cysteine 43–cysteine 57, cysteine 50–cysteine 61, and cysteine 56–cysteine 66.

Belongs to the conotoxin O1 superfamily. In terms of tissue distribution, expressed by the venom duct.

The protein localises to the secreted. The sequence is that of Conotoxin AbVIO from Conus abbreviatus (Abbreviated cone).